A 157-amino-acid polypeptide reads, in one-letter code: Protein E6 (157 aa).

Zinc fingers lie at residues 41-77 (CNFC…CRVC) and 114-150 (CQTC…CRQC).

The protein belongs to the papillomaviridae E6 protein family. In terms of assembly, forms homodimers. Interacts with ubiquitin-protein ligase UBE3A/E6-AP; this interaction stimulates UBE3A ubiquitin activity. Interacts with host BAK1.

The protein resides in the host cytoplasm. The protein localises to the host nucleus. In terms of biological role, plays a major role in the induction and maintenance of cellular transformation. E6 associates with host UBE3A/E6-AP ubiquitin-protein ligase and modulates its activity. Protects host keratinocytes from apoptosis by mediating the degradation of host BAK1. May also inhibit host immune response. In Human papillomavirus 36, this protein is Protein E6.